Here is a 157-residue protein sequence, read N- to C-terminus: UPF0756 membrane protein ABC2716 (157 aa).

The next 4 helical transmembrane spans lie at 8 to 28, 54 to 74, 84 to 104, and 117 to 137; these read FLLLLMAIALIAKNQSLIIAI, LGVTIITIAVLVPIATGDIGF, LYAWVALGSGIAVALVAASGI, and LVLGTIVAVSFLNGVAVGPLI.

It belongs to the UPF0756 family.

It localises to the cell membrane. The protein is UPF0756 membrane protein ABC2716 of Shouchella clausii (strain KSM-K16) (Alkalihalobacillus clausii).